We begin with the raw amino-acid sequence, 252 residues long: Protein IRON-RELATED TRANSCRIPTION FACTOR 3 (252 aa).

The basic motif stretch occupies residues 36-49; the sequence is PRKVHKSEREKLKR. One can recognise a bHLH domain in the interval 36-86; it reads PRKVHKSEREKLKRGHLNDLFGELGNMLEADRQSNGKACILTDTTRILRDL. The interval 50 to 86 is helix-loop-helix motif; sequence GHLNDLFGELGNMLEADRQSNGKACILTDTTRILRDL. The stretch at 76 to 131 forms a coiled coil; sequence LTDTTRILRDLLSQVKSLRQENSTLQNESNYVTMERNELQDENGALRSEISDLQNE. Residues 135-252 are disordered; that stretch reads RATGSPGWGH…GLPRMEDEQM (118 aa). A compositionally biased stretch (low complexity) spans 162–176; it reads PSQQPMQPSPMTTST. Residues 208 to 219 are compositionally biased toward acidic residues; it reads PAEDPEPSEDQE.

This sequence belongs to the bHLH protein family.

It is found in the nucleus. In terms of biological role, transcription factor that acts as a negative regulator of the iron deficiency response. Suppresses the induction of iron deficiency responsive genes, such as NAS1, NAS2, IRO2, IRT1, YSL15, and NRAMP1. In Oryza sativa subsp. japonica (Rice), this protein is Protein IRON-RELATED TRANSCRIPTION FACTOR 3.